The primary structure comprises 255 residues: Small ribosomal subunit protein uS2 (255 aa).

The protein belongs to the universal ribosomal protein uS2 family.

The chain is Small ribosomal subunit protein uS2 from Streptococcus pyogenes serotype M49 (strain NZ131).